The sequence spans 468 residues: Phenylalanine--tRNA ligase alpha subunit (468 aa).

L-phenylalanine contacts are provided by residues Thr311, 350–352 (QLD), and Phe390. Residue Glu392 participates in Mg(2+) binding.

Belongs to the class-II aminoacyl-tRNA synthetase family. Phe-tRNA synthetase alpha subunit type 2 subfamily. In terms of assembly, tetramer of two alpha and two beta subunits. Requires Mg(2+) as cofactor.

It is found in the cytoplasm. It carries out the reaction tRNA(Phe) + L-phenylalanine + ATP = L-phenylalanyl-tRNA(Phe) + AMP + diphosphate + H(+). This Saccharolobus solfataricus (strain ATCC 35092 / DSM 1617 / JCM 11322 / P2) (Sulfolobus solfataricus) protein is Phenylalanine--tRNA ligase alpha subunit.